Consider the following 545-residue polypeptide: MTKVPATKKLQKITSKKALWLFSSADQLTQQASDKTAKNSKYIDKEIANLKKDLMRSRFLIQCVKIGRGYFNILREENAMKKKQQLLQKLKEEELNKFQPAKKFSDIHCRDNLLATYDCEKLKKLEAGIIIRPFTPIHSCLMAPSLPESHVDPLFRQLCALHWLLEALTIDHTHHTMRPLIACWNPKDPGGSKSTIKKINKDKSMGQRWDHFVTAPKTKKYKAPAIRTAMASRKPSRRGSTLSLTRTSGGSSPQSSMMSVNPGSDEPMGSKDIEDNESSSTKPEEEILHLYLQKLLEMVREDARRTILVESEIQKKAPSILSLVKQIKSEYGWKEWQTTHKSSERSSTTSAESHIQVIQKKSKSRVNRDIIYCKTGVCSNMRAKFFSVAQEAGFCLQDKMEILRKRQEERGLQKFHSFIVTSNFQKDITKMRHQVSIVKGDAEEIADHWYFDLLSKLPEDLKSFRPAKKILMKLQKFGENLDLRIRPHVLLKVLQDLRIWELCSPDIAVAIEFVREHIIHMPQEDYINWLQSRVNIPFRQRTILT.

Positions 72–99 form a coiled coil; it reads NILREENAMKKKQQLLQKLKEEELNKFQ. The tract at residues 224–284 is disordered; that stretch reads PAIRTAMASR…DNESSSTKPE (61 aa). The segment covering 238-259 has biased composition (low complexity); that stretch reads RGSTLSLTRTSGGSSPQSSMMS.

The chain is Coiled-coil domain-containing protein 60 (Ccdc60) from Mus musculus (Mouse).